Reading from the N-terminus, the 275-residue chain is NH(3)-dependent NAD(+) synthetase (275 aa).

Residue glycine 46–serine 53 coordinates ATP. Aspartate 52 is a binding site for Mg(2+). Arginine 140 lines the deamido-NAD(+) pocket. Threonine 160 contacts ATP. Mg(2+) is bound at residue glutamate 165. Deamido-NAD(+)-binding residues include lysine 173 and aspartate 180. 2 residues coordinate ATP: lysine 189 and threonine 211. Histidine 260–lysine 261 provides a ligand contact to deamido-NAD(+).

This sequence belongs to the NAD synthetase family. As to quaternary structure, homodimer.

The catalysed reaction is deamido-NAD(+) + NH4(+) + ATP = AMP + diphosphate + NAD(+) + H(+). It participates in cofactor biosynthesis; NAD(+) biosynthesis; NAD(+) from deamido-NAD(+) (ammonia route): step 1/1. Functionally, catalyzes the ATP-dependent amidation of deamido-NAD to form NAD. Uses ammonia as a nitrogen source. This is NH(3)-dependent NAD(+) synthetase from Escherichia coli O17:K52:H18 (strain UMN026 / ExPEC).